A 125-amino-acid chain; its full sequence is Prefoldin subunit beta (125 aa).

It belongs to the prefoldin subunit beta family. In terms of assembly, heterohexamer of two alpha and four beta subunits.

It localises to the cytoplasm. Its function is as follows. Molecular chaperone capable of stabilizing a range of proteins. Seems to fulfill an ATP-independent, HSP70-like function in archaeal de novo protein folding. In Sulfolobus acidocaldarius (strain ATCC 33909 / DSM 639 / JCM 8929 / NBRC 15157 / NCIMB 11770), this protein is Prefoldin subunit beta.